A 736-amino-acid chain; its full sequence is Phosphoribosylformylglycinamidine synthase subunit PurL (736 aa).

Histidine 48 is a catalytic residue. Residues tyrosine 51 and lysine 90 each coordinate ATP. Glutamate 92 serves as a coordination point for Mg(2+). Substrate-binding positions include serine 93–histidine 96 and arginine 115. Histidine 94 (proton acceptor) is an active-site residue. Aspartate 116 lines the Mg(2+) pocket. Glutamine 239 serves as a coordination point for substrate. Residue aspartate 267 participates in Mg(2+) binding. Glutamate 311 to glutamine 313 is a substrate binding site. Aspartate 492 and glycine 529 together coordinate ATP. Asparagine 530 is a binding site for Mg(2+). Residue serine 532 coordinates substrate.

Belongs to the FGAMS family. As to quaternary structure, monomer. Part of the FGAM synthase complex composed of 1 PurL, 1 PurQ and 2 PurS subunits.

The protein localises to the cytoplasm. The catalysed reaction is N(2)-formyl-N(1)-(5-phospho-beta-D-ribosyl)glycinamide + L-glutamine + ATP + H2O = 2-formamido-N(1)-(5-O-phospho-beta-D-ribosyl)acetamidine + L-glutamate + ADP + phosphate + H(+). The protein operates within purine metabolism; IMP biosynthesis via de novo pathway; 5-amino-1-(5-phospho-D-ribosyl)imidazole from N(2)-formyl-N(1)-(5-phospho-D-ribosyl)glycinamide: step 1/2. Functionally, part of the phosphoribosylformylglycinamidine synthase complex involved in the purines biosynthetic pathway. Catalyzes the ATP-dependent conversion of formylglycinamide ribonucleotide (FGAR) and glutamine to yield formylglycinamidine ribonucleotide (FGAM) and glutamate. The FGAM synthase complex is composed of three subunits. PurQ produces an ammonia molecule by converting glutamine to glutamate. PurL transfers the ammonia molecule to FGAR to form FGAM in an ATP-dependent manner. PurS interacts with PurQ and PurL and is thought to assist in the transfer of the ammonia molecule from PurQ to PurL. The sequence is that of Phosphoribosylformylglycinamidine synthase subunit PurL from Beijerinckia indica subsp. indica (strain ATCC 9039 / DSM 1715 / NCIMB 8712).